A 654-amino-acid chain; its full sequence is Probable potassium transport system protein Kup (654 aa).

13 helical membrane passes run glycine 17–methionine 37, isoleucine 40–tryptophan 60, valine 71–leucine 91, tryptophan 99–proline 119, isoleucine 137–glycine 157, phenylalanine 164–isoleucine 184, leucine 202–glycine 222, isoleucine 240–leucine 260, leucine 281–isoleucine 301, isoleucine 338–phenylalanine 358, glycine 369–leucine 389, tryptophan 394–alanine 414, and glycine 423–alanine 443.

This sequence belongs to the HAK/KUP transporter (TC 2.A.72) family.

The protein localises to the cell inner membrane. It catalyses the reaction K(+)(in) + H(+)(in) = K(+)(out) + H(+)(out). Its function is as follows. Transport of potassium into the cell. Likely operates as a K(+):H(+) symporter. The sequence is that of Probable potassium transport system protein Kup from Flavobacterium psychrophilum (strain ATCC 49511 / DSM 21280 / CIP 103535 / JIP02/86).